The sequence spans 219 residues: MSETAPAAPAAPAPAEKTPIKKKARKAAGGAKRKASGPPVSELITKAVAASKERSGVSLAALKKALAAAGYDVEKNNSRIKLGLKSLVSKGTLVQTKGTGASGSFKLNKKAASGEAKPKAKKAGAAKAKKPAGAAKKPKKATGTATPKKSTKKTPKKAKKPAAAAGAKKAKSPKKAKATKAKKAPKSPAKARAVKPKAAKPKTSKPKAAKPKKTAAKKK.

The segment covering 1–15 has biased composition (low complexity); the sequence is MSETAPAAPAAPAPA. Residues 1 to 41 are disordered; the sequence is MSETAPAAPAAPAPAEKTPIKKKARKAAGGAKRKASGPPVS. S2 is modified (N-acetylserine). S2 carries the post-translational modification Phosphoserine. K17 bears the N6-acetyllysine mark. Residue T18 is modified to Phosphothreonine. A compositionally biased stretch (basic residues) spans 20–35; it reads IKKKARKAAGGAKRKA. K26 carries the N6-acetyllysine; alternate modification. K26 is subject to N6-methyllysine; alternate. K34 bears the N6-(beta-hydroxybutyryl)lysine; alternate mark. K34 bears the N6-succinyllysine; alternate mark. A Phosphoserine modification is found at S36. The H15 domain maps to 36–109; it reads SGPPVSELIT…GASGSFKLNK (74 aa). An N6-(beta-hydroxybutyryl)lysine modification is found at K52. Residue R54 is modified to Citrulline. Residues K64, K85, K90, and K106 each carry the N6-(beta-hydroxybutyryl)lysine modification. The segment at 92 to 219 is disordered; it reads TLVQTKGTGA…KPKKTAAKKK (128 aa). Over residues 119-140 the composition is skewed to basic residues; it reads KAKKAGAAKAKKPAGAAKKPKK. T146 carries the phosphothreonine modification. Basic residues-rich tracts occupy residues 149–160 and 168–185; these read KSTKKTPKKAKK and KKAK…KKAP. S150 is modified (ADP-ribosylserine). S187 bears the Phosphoserine mark. Residues 192 to 219 show a composition bias toward basic residues; the sequence is RAVKPKAAKPKTSKPKAAKPKKTAAKKK.

This sequence belongs to the histone H1/H5 family. H1 histones are progressively phosphorylated during the cell cycle, becoming maximally phosphorylated during late G2 phase and M phase, and being dephosphorylated sharply thereafter. In terms of processing, acetylated at Lys-26. Deacetylated at Lys-26 by SIRT1. Post-translationally, citrullination at Arg-54 (H1R54ci) by PADI4 takes place within the DNA-binding site of H1 and results in its displacement from chromatin and global chromatin decondensation, thereby promoting pluripotency and stem cell maintenance. ADP-ribosylated on Ser-150 in response to DNA damage.

The protein resides in the nucleus. It localises to the chromosome. Histone H1 protein binds to linker DNA between nucleosomes forming the macromolecular structure known as the chromatin fiber. Histones H1 are necessary for the condensation of nucleosome chains into higher-order structured fibers. Also acts as a regulator of individual gene transcription through chromatin remodeling, nucleosome spacing and DNA methylation. This is Histone H1.4 from Rattus norvegicus (Rat).